Consider the following 141-residue polypeptide: Putative pre-16S rRNA nuclease (141 aa).

It belongs to the YqgF nuclease family.

The protein localises to the cytoplasm. Its function is as follows. Could be a nuclease involved in processing of the 5'-end of pre-16S rRNA. This Shewanella oneidensis (strain ATCC 700550 / JCM 31522 / CIP 106686 / LMG 19005 / NCIMB 14063 / MR-1) protein is Putative pre-16S rRNA nuclease.